Here is a 263-residue protein sequence, read N- to C-terminus: 3-methyl-2-oxobutanoate hydroxymethyltransferase (263 aa).

Asp45 and Asp84 together coordinate Mg(2+). 3-methyl-2-oxobutanoate is bound by residues Asp45–Ser46, Asp84, and Lys112. Glu114 lines the Mg(2+) pocket. Glu181 functions as the Proton acceptor in the catalytic mechanism.

Belongs to the PanB family. As to quaternary structure, homodecamer; pentamer of dimers. Mg(2+) is required as a cofactor.

The protein resides in the cytoplasm. It catalyses the reaction 3-methyl-2-oxobutanoate + (6R)-5,10-methylene-5,6,7,8-tetrahydrofolate + H2O = 2-dehydropantoate + (6S)-5,6,7,8-tetrahydrofolate. The protein operates within cofactor biosynthesis; (R)-pantothenate biosynthesis; (R)-pantoate from 3-methyl-2-oxobutanoate: step 1/2. Its function is as follows. Catalyzes the reversible reaction in which hydroxymethyl group from 5,10-methylenetetrahydrofolate is transferred onto alpha-ketoisovalerate to form ketopantoate. The protein is 3-methyl-2-oxobutanoate hydroxymethyltransferase of Proteus mirabilis (strain HI4320).